The chain runs to 640 residues: Chaperone protein DnaK (640 aa).

Thr199 bears the Phosphothreonine; by autocatalysis mark. The span at 606–621 shows a compositional bias: low complexity; sequence QQAAGAGAQQADGTGK. Residues 606-640 form a disordered region; the sequence is QQAAGAGAQQADGTGKAADDGVVDAEFEEVKEDNK. Over residues 626–640 the composition is skewed to acidic residues; sequence GVVDAEFEEVKEDNK.

This sequence belongs to the heat shock protein 70 family.

Functionally, acts as a chaperone. The chain is Chaperone protein DnaK from Cellvibrio japonicus (strain Ueda107) (Pseudomonas fluorescens subsp. cellulosa).